Consider the following 295-residue polypeptide: Lipoyl synthase (295 aa).

Positions 34, 39, 45, 60, 64, 67, and 273 each coordinate [4Fe-4S] cluster. Residues 46 to 262 (WNKRHATIMI…KLMAYAKGFS (217 aa)) form the Radical SAM core domain.

Belongs to the radical SAM superfamily. Lipoyl synthase family. [4Fe-4S] cluster serves as cofactor.

The protein localises to the cytoplasm. It carries out the reaction [[Fe-S] cluster scaffold protein carrying a second [4Fe-4S](2+) cluster] + N(6)-octanoyl-L-lysyl-[protein] + 2 oxidized [2Fe-2S]-[ferredoxin] + 2 S-adenosyl-L-methionine + 4 H(+) = [[Fe-S] cluster scaffold protein] + N(6)-[(R)-dihydrolipoyl]-L-lysyl-[protein] + 4 Fe(3+) + 2 hydrogen sulfide + 2 5'-deoxyadenosine + 2 L-methionine + 2 reduced [2Fe-2S]-[ferredoxin]. The protein operates within protein modification; protein lipoylation via endogenous pathway; protein N(6)-(lipoyl)lysine from octanoyl-[acyl-carrier-protein]: step 2/2. In terms of biological role, catalyzes the radical-mediated insertion of two sulfur atoms into the C-6 and C-8 positions of the octanoyl moiety bound to the lipoyl domains of lipoate-dependent enzymes, thereby converting the octanoylated domains into lipoylated derivatives. The polypeptide is Lipoyl synthase (Anaplasma marginale (strain St. Maries)).